We begin with the raw amino-acid sequence, 72 residues long: uncharacterized protein (72 aa).

Helical transmembrane passes span 15-35 (WEILVYILVVGFGFALFIGSI) and 50-70 (ILIYVSCKFVFLIWISLMYFI).

It localises to the host membrane. This is an uncharacterized protein from Spiroplasma melliferum (SpV1).